Reading from the N-terminus, the 317-residue chain is Spore protein CgeB (317 aa).

May be involved in maturation of the outermost layer of the spore. May act as a glycosyltransferase that contributes to the glycosylation state of the spore. This is Spore protein CgeB from Bacillus subtilis (strain 168).